Consider the following 551-residue polypeptide: L-lactate permease (551 aa).

The next 12 helical transmembrane spans lie at 13–33 (NIWL…FALI), 37–57 (LKGY…ALLF), 69–89 (VVYG…AAVF), 131–151 (GAAG…GLGF), 159–179 (LCLI…PILV), 194–214 (MVGR…MAIM), 245–265 (IGPE…LTLF), 306–326 (FLFL…ALFA), 366–386 (FDWF…SIVW), 405–425 (LALP…SNYS), 438–458 (TGSA…FLTG), and 530–550 (IFTC…TWMI).

This sequence belongs to the lactate permease family.

The protein resides in the cell inner membrane. The catalysed reaction is (S)-lactate(in) + H(+)(in) = (S)-lactate(out) + H(+)(out). It catalyses the reaction (R)-lactate(in) + H(+)(in) = (R)-lactate(out) + H(+)(out). It carries out the reaction glycolate(in) + H(+)(in) = glycolate(out) + H(+)(out). In terms of biological role, uptake of L-lactate across the membrane. Can also transport D-lactate and glycolate. Seems to be driven by a proton motive force. This chain is L-lactate permease (lldP), found in Salmonella typhi.